Here is a 51-residue protein sequence, read N- to C-terminus: MSSHKTFTIKRFLAKKQKQNRPIPQWIQMKPGSKIRYNSKRRHWRRTKLGL.

Belongs to the eukaryotic ribosomal protein eL39 family. In terms of assembly, component of a male germ cell-specific 60S large ribosomal subunit (LSU), which contains RPL10L and RPL39L, instead of RPL10 and RPL39 paralogs. The composition of the rest of the complex is similar to classical ribosomes. In terms of tissue distribution, testis specific.

It is found in the cytoplasm. In terms of biological role, male germ cell-specific component of the ribosome, which is required for the formation of sperm and male fertility. Replaces the RPL39 paralog in the ribosome of male germ cells. The ribosome is a large ribonucleoprotein complex responsible for the synthesis of proteins in the cell. The male germ cell-specific ribosome displays a ribosomal polypeptide exit tunnel of distinct size and charge states compared with the classical ribosome. It is responsible for regulating the biosynthesis and folding of a subset of male germ-cell-specific proteins that are essential for the formation of sperm. The polypeptide is Ribosomal protein eL39-like 2 (Homo sapiens (Human)).